A 256-amino-acid polypeptide reads, in one-letter code: Ribosomal RNA small subunit methyltransferase J (256 aa).

S-adenosyl-L-methionine contacts are provided by residues 101 to 102 (RD), 117 to 118 (ER), and aspartate 174.

It belongs to the methyltransferase superfamily. RsmJ family.

Its subcellular location is the cytoplasm. It carries out the reaction guanosine(1516) in 16S rRNA + S-adenosyl-L-methionine = N(2)-methylguanosine(1516) in 16S rRNA + S-adenosyl-L-homocysteine + H(+). In terms of biological role, specifically methylates the guanosine in position 1516 of 16S rRNA. This is Ribosomal RNA small subunit methyltransferase J from Chromohalobacter salexigens (strain ATCC BAA-138 / DSM 3043 / CIP 106854 / NCIMB 13768 / 1H11).